The following is a 364-amino-acid chain: Glutamine synthetase (364 aa).

Residues 15-94 (VLAEYIWIDA…VLAECWNNDG (80 aa)) form the GS beta-grasp domain. A GS catalytic domain is found at 101 to 364 (HRHECAKLMS…ETKRGEEEGF (264 aa)).

The protein belongs to the glutamine synthetase family. In terms of assembly, homooctamer.

Its subcellular location is the cytoplasm. The catalysed reaction is L-glutamate + NH4(+) + ATP = L-glutamine + ADP + phosphate + H(+). The chain is Glutamine synthetase (GLN1) from Yarrowia lipolytica (strain CLIB 122 / E 150) (Yeast).